The sequence spans 651 residues: Kinesin-like protein KIF22-A (651 aa).

The Kinesin motor domain maps to 31–359 (RVRVAVRLRP…LNFAAKSKQI (329 aa)). Residue 116–123 (GPTGAGKT) participates in ATP binding. Positions 366 to 413 (QETTQTVVQPAMKRPREETGHIAGSQKRKKSKNDSTESSPNSSMDTAG) are disordered. The span at 401–410 (TESSPNSSMD) shows a compositional bias: polar residues. Positions 452–498 (KRERMALLKKWEESQMEIERLKEKQKELEQKAMEAEARLEKSNNSDL) form a coiled coil. The Important for regulated proteolytic degradation signature appears at 561–564 (GLEN).

Belongs to the TRAFAC class myosin-kinesin ATPase superfamily. Kinesin family. Post-translationally, ubiquitinated, leading to its subsequent proteasomal degradation.

Its subcellular location is the nucleus. It is found in the cytoplasm. It localises to the cytoskeleton. In terms of biological role, kinesin family member that is involved in spindle formation and the movements of chromosomes during mitosis and meiosis. Binds to microtubules and to DNA. The protein is Kinesin-like protein KIF22-A (kif22-a) of Xenopus laevis (African clawed frog).